The following is a 1107-amino-acid chain: MNKNQNDWKVELRKATRSSLISITNETDFQLQRISCKLQQGMLRLIPPEIIPPKSSIEFGTESNAFMTGTKGSVIYIVLPPSSSPINVGSIQSLTHLQSLKLWDPLVYIIIEWSTPYWSQHSCSIQVQPQQNSSLLNVKSNLSQREINKQIHSEVLMFIHNNDSNGEIQFKIYKNSLSNSGNGSSGGNNNNNNNSLNNSNNSIGSSGGNGGGGSNGSSPSMSPQFTSISKTNSPQIINTSSNNLNSSSGNNNKPIFSIVDNDYTSSQSTSSIPVVAGINSNSNSNTSGSGSTSISSPNSSFSSSLPSFFSNNFPLPWSNDGFGVDGGWKANVKRGSRGQFITIRNNTSKHLIRRNQTCLNSGRWCEPPPEGIPPNSMIEFGSVSSGFTTGTDGVIHYHSQGSKSDFRFQFNNPLMGKSSFTYHCPNGFNVEEKYTDGNISSVSFTINEGDSQTIPKQIPDSPLPIPPIKTDPKQVFINDDSIRIFSFNVGSINVKESGKELMNINNNNNNNNSNNNNNNNDQNKDKDNQMLNNSNLINKRIEQISKNLINFSEKYDIILLQEVFLDSSKDILIKNLKIYYPYIIDRCGENSGLFFASRFPPLWNEFRQFNNGIGSDVKYGKGVQGVKLDISTIKENTYLYVFNANLQANPDNSIAWQMVNGDDKQRKAATVRTLQLQSIRDFISTELAMQSSTIANSALLLVGDFNLNAEVEQVISDHESNSITLSQIIPELAKKINSKEITLTFSYQLLEYLNDLNIPMRYLGILRSQLQNNRMKSLVLTEMITYIIKKDIIEHLTQRHNQYQSNINEDEQIYREVVLETFNLIFHYTRKDCIQFWRHHLRKRLRSEFSSSLSEIEQQDWVDLRTHVINLQLFTSLKYSLEITFNPKAVFQIMKGSRINTKEIIPIPLILPEQIEEIILPPLTSYWGSDSNTDINYFTNIDHLKEQQKKQAQLQQLQQQQAQQQQQAQQQTQQQQNSNINIINTIESSQIQQNNNIQIYLKQTDEYNNMLKILGNPVDLFRESNPFSPGYTIHQSLNQRVEKPSLKERVDYILNFKLSPNFGDHEGRNQLLKLECTETNIVPMGATPQTRLSNHFALECILHIKKK.

Residues 180 to 204 are compositionally biased toward low complexity; it reads SGNGSSGGNNNNNNNSLNNSNNSIG. 2 disordered regions span residues 180-251 and 501-530; these read SGNG…SGNN and LMNINNNNNNNNSNNNNNNNDQNKDKDNQM. Residues 205-215 are compositionally biased toward gly residues; that stretch reads SSGGNGGGGSN. A compositionally biased stretch (polar residues) spans 219–237; sequence PSMSPQFTSISKTNSPQII. Composition is skewed to low complexity over residues 238 to 251 and 501 to 521; these read NTSSNNLNSSSGNN and LMNINNNNNNNNSNNNNNNND. Coiled-coil stretches lie at residues 789 to 816 and 940 to 1012; these read KKDIIEHLTQRHNQYQSNINEDEQIYRE and NIDH…NMLK.

This is an uncharacterized protein from Dictyostelium discoideum (Social amoeba).